The sequence spans 425 residues: Histidine--tRNA ligase (425 aa).

The protein belongs to the class-II aminoacyl-tRNA synthetase family. In terms of assembly, homodimer.

It is found in the cytoplasm. It carries out the reaction tRNA(His) + L-histidine + ATP = L-histidyl-tRNA(His) + AMP + diphosphate + H(+). In Streptococcus uberis (strain ATCC BAA-854 / 0140J), this protein is Histidine--tRNA ligase.